A 209-amino-acid chain; its full sequence is Large ribosomal subunit protein uL3 (209 aa).

An N5-methylglutamine modification is found at Gln150.

The protein belongs to the universal ribosomal protein uL3 family. Part of the 50S ribosomal subunit. Forms a cluster with proteins L14 and L19. In terms of processing, methylated by PrmB.

Its function is as follows. One of the primary rRNA binding proteins, it binds directly near the 3'-end of the 23S rRNA, where it nucleates assembly of the 50S subunit. In Vibrio vulnificus (strain CMCP6), this protein is Large ribosomal subunit protein uL3.